The sequence spans 155 residues: MGASVKPAARRNARQFALQAIYSWQITKDNVATIEEQFLSGDKYDEEELHASEPALAAPETDVAYFRELLSGVVLSHSELDSKIRPYVSRPMQDLDMMELALLRLAMYEMTRREDVPYKVVINEAIELAKVFAAEDSHKFVNGVLDKAAPHVRKK.

Belongs to the NusB family.

Functionally, involved in transcription antitermination. Required for transcription of ribosomal RNA (rRNA) genes. Binds specifically to the boxA antiterminator sequence of the ribosomal RNA (rrn) operons. This is Transcription antitermination protein NusB from Vibrio campbellii (strain ATCC BAA-1116).